The sequence spans 161 residues: NAD(P)H-quinone oxidoreductase subunit I, chloroplastic (161 aa).

2 consecutive 4Fe-4S ferredoxin-type domains span residues 55–84 (GRIHFEFDKCIACEVCVRVCPIDLPIVDWK) and 95–124 (LNYSIDFGICIFCGNCIEYCPTNCLSMTEE). Residues Cys-64, Cys-67, Cys-70, Cys-74, Cys-104, Cys-107, Cys-110, and Cys-114 each coordinate [4Fe-4S] cluster.

Belongs to the complex I 23 kDa subunit family. NDH is composed of at least 16 different subunits, 5 of which are encoded in the nucleus. [4Fe-4S] cluster serves as cofactor.

Its subcellular location is the plastid. The protein resides in the chloroplast thylakoid membrane. It catalyses the reaction a plastoquinone + NADH + (n+1) H(+)(in) = a plastoquinol + NAD(+) + n H(+)(out). The catalysed reaction is a plastoquinone + NADPH + (n+1) H(+)(in) = a plastoquinol + NADP(+) + n H(+)(out). NDH shuttles electrons from NAD(P)H:plastoquinone, via FMN and iron-sulfur (Fe-S) centers, to quinones in the photosynthetic chain and possibly in a chloroplast respiratory chain. The immediate electron acceptor for the enzyme in this species is believed to be plastoquinone. Couples the redox reaction to proton translocation, and thus conserves the redox energy in a proton gradient. In Phaseolus vulgaris (Kidney bean), this protein is NAD(P)H-quinone oxidoreductase subunit I, chloroplastic.